A 630-amino-acid polypeptide reads, in one-letter code: Chaperone protein HtpG (630 aa).

The interval 1–327 (MSVETYKFDA…SEDLSLNISR (327 aa)) is a; substrate-binding. The tract at residues 328 to 551 (ETLQHSPLID…EGSMDIRTER (224 aa)) is b. Positions 483–499 (TKTAKSSDTNNDGKDDT) are enriched in basic and acidic residues. The disordered stretch occupies residues 483 to 504 (TKTAKSSDTNNDGKDDTSSSDD). Residues 552 to 630 (FLIEQKQLSS…INFFIEKSVN (79 aa)) are c.

The protein belongs to the heat shock protein 90 family. As to quaternary structure, homodimer.

It is found in the cytoplasm. In terms of biological role, molecular chaperone. Has ATPase activity. The protein is Chaperone protein HtpG of Orientia tsutsugamushi (strain Boryong) (Rickettsia tsutsugamushi).